Consider the following 361-residue polypeptide: Phosphoserine aminotransferase (361 aa).

An L-glutamate-binding site is contributed by Arg-42. Residues 76-77, Trp-102, Thr-152, Asp-172, and Gln-195 contribute to the pyridoxal 5'-phosphate site; that span reads AT. Lys-196 carries the N6-(pyridoxal phosphate)lysine modification. 237-238 contacts pyridoxal 5'-phosphate; it reads NT.

It belongs to the class-V pyridoxal-phosphate-dependent aminotransferase family. SerC subfamily. As to quaternary structure, homodimer. Requires pyridoxal 5'-phosphate as cofactor.

The protein resides in the cytoplasm. It carries out the reaction O-phospho-L-serine + 2-oxoglutarate = 3-phosphooxypyruvate + L-glutamate. The enzyme catalyses 4-(phosphooxy)-L-threonine + 2-oxoglutarate = (R)-3-hydroxy-2-oxo-4-phosphooxybutanoate + L-glutamate. It functions in the pathway amino-acid biosynthesis; L-serine biosynthesis; L-serine from 3-phospho-D-glycerate: step 2/3. The protein operates within cofactor biosynthesis; pyridoxine 5'-phosphate biosynthesis; pyridoxine 5'-phosphate from D-erythrose 4-phosphate: step 3/5. In terms of biological role, catalyzes the reversible conversion of 3-phosphohydroxypyruvate to phosphoserine and of 3-hydroxy-2-oxo-4-phosphonooxybutanoate to phosphohydroxythreonine. The chain is Phosphoserine aminotransferase from Xanthomonas campestris pv. campestris (strain 8004).